A 1363-amino-acid chain; its full sequence is DNA-directed RNA polymerase subunit beta' (1363 aa).

The tract at residues Met-1–Asn-39 is disordered. Positions Gly-14 to Ala-24 are enriched in low complexity. Zn(2+) contacts are provided by Cys-248, Cys-315, Cys-322, and Cys-325.

Belongs to the RNA polymerase beta' chain family. RpoC2 subfamily. In terms of assembly, in cyanobacteria the RNAP catalytic core is composed of 2 alpha, 1 beta, 1 beta', 1 gamma and 1 omega subunit. When a sigma factor is associated with the core the holoenzyme is formed, which can initiate transcription. Requires Zn(2+) as cofactor.

It carries out the reaction RNA(n) + a ribonucleoside 5'-triphosphate = RNA(n+1) + diphosphate. Its function is as follows. DNA-dependent RNA polymerase catalyzes the transcription of DNA into RNA using the four ribonucleoside triphosphates as substrates. The sequence is that of DNA-directed RNA polymerase subunit beta' from Synechococcus sp. (strain WH7803).